The chain runs to 204 residues: Thiamine-phosphate synthase (204 aa).

Residues 28-32 (QLRIK) and asparagine 60 contribute to the 4-amino-2-methyl-5-(diphosphooxymethyl)pyrimidine site. Residues aspartate 61 and aspartate 80 each contribute to the Mg(2+) site. 4-amino-2-methyl-5-(diphosphooxymethyl)pyrimidine is bound by residues serine 99 and lysine 128. Residues glycine 157 and 177–178 (VT) contribute to the 2-[(2R,5Z)-2-carboxy-4-methylthiazol-5(2H)-ylidene]ethyl phosphate site.

It belongs to the thiamine-phosphate synthase family. The cofactor is Mg(2+).

It carries out the reaction 2-[(2R,5Z)-2-carboxy-4-methylthiazol-5(2H)-ylidene]ethyl phosphate + 4-amino-2-methyl-5-(diphosphooxymethyl)pyrimidine + 2 H(+) = thiamine phosphate + CO2 + diphosphate. The enzyme catalyses 2-(2-carboxy-4-methylthiazol-5-yl)ethyl phosphate + 4-amino-2-methyl-5-(diphosphooxymethyl)pyrimidine + 2 H(+) = thiamine phosphate + CO2 + diphosphate. It catalyses the reaction 4-methyl-5-(2-phosphooxyethyl)-thiazole + 4-amino-2-methyl-5-(diphosphooxymethyl)pyrimidine + H(+) = thiamine phosphate + diphosphate. It participates in cofactor biosynthesis; thiamine diphosphate biosynthesis; thiamine phosphate from 4-amino-2-methyl-5-diphosphomethylpyrimidine and 4-methyl-5-(2-phosphoethyl)-thiazole: step 1/1. Functionally, condenses 4-methyl-5-(beta-hydroxyethyl)thiazole monophosphate (THZ-P) and 2-methyl-4-amino-5-hydroxymethyl pyrimidine pyrophosphate (HMP-PP) to form thiamine monophosphate (TMP). This is Thiamine-phosphate synthase from Rhizobium etli (strain ATCC 51251 / DSM 11541 / JCM 21823 / NBRC 15573 / CFN 42).